The chain runs to 175 residues: MLWIWNALIVFVTVIGMEVIAALAHKYIMHGWGWGWHLSHHEPRKGAFEVNDLYAVVFAALSILLIYLGSTGMWPLQWIGAGMTAYGLLYFMVHDGLVHQRWPFRYIPRKGYLKRLYMAHRMHHAVRGKEGCVSFGFLYAPPLSKLQATLRERHGARAGAARDAQGGEDEPASGK.

The 126-residue stretch at Phe-11–Gly-136 folds into the Fatty acid hydroxylase domain.

This sequence belongs to the sterol desaturase family.

It carries out the reaction all-trans-beta-carotene + 4 reduced [2Fe-2S]-[ferredoxin] + 2 O2 + 4 H(+) = all-trans-zeaxanthin + 4 oxidized [2Fe-2S]-[ferredoxin] + 2 H2O. It participates in carotenoid biosynthesis; zeaxanthin biosynthesis. Functionally, catalyzes the hydroxylation reaction from beta-carotene to zeaxanthin. This chain is Beta-carotene hydroxylase (crtZ), found in Pantoea ananas (Erwinia uredovora).